The sequence spans 385 residues: GDSL esterase/lipase At5g08460 (385 aa).

The first 35 residues, 1 to 35, serve as a signal peptide directing secretion; sequence MHDSEIFKFKDMMMMSCTVQTLVLVPWFLVVFVLA. The active-site Nucleophile is Ser-56. Residues Asn-218 and Asn-285 are each glycosylated (N-linked (GlcNAc...) asparagine). Catalysis depends on residues Asp-350 and His-353. Asn-368 and Asn-378 each carry an N-linked (GlcNAc...) asparagine glycan.

It belongs to the 'GDSL' lipolytic enzyme family.

Its subcellular location is the secreted. The sequence is that of GDSL esterase/lipase At5g08460 from Arabidopsis thaliana (Mouse-ear cress).